Consider the following 197-residue polypeptide: Putative mediator of RNA polymerase II transcription subunit 9 (197 aa).

Positions 83 to 117 (GINRSLENQEELLKTYKQTLKKKVELLEKLKKLEI) form a coiled coil. Positions 126 to 144 (STSSQSPQIQSKLELQTEL) are enriched in polar residues. A disordered region spans residues 126–197 (STSSQSPQIQ…KETTEDIMKE (72 aa)). Residues 145–182 (SQTEPSQTEPSQTEPSQTEPSQTESSQIESSQIESSQT) show a composition bias toward low complexity. Over residues 183–197 (ETEKSKETTEDIMKE) the composition is skewed to basic and acidic residues.

The protein belongs to the Mediator complex subunit 9 family. In terms of assembly, component of the Mediator complex.

The protein localises to the nucleus. Component of the Mediator complex, a coactivator involved in the regulated transcription of nearly all RNA polymerase II-dependent genes. Mediator functions as a bridge to convey information from gene-specific regulatory proteins to the basal RNA polymerase II transcription machinery. Mediator is recruited to promoters by direct interactions with regulatory proteins and serves as a scaffold for the assembly of a functional preinitiation complex with RNA polymerase II and the general transcription factors. In Dictyostelium discoideum (Social amoeba), this protein is Putative mediator of RNA polymerase II transcription subunit 9 (med9).